A 185-amino-acid polypeptide reads, in one-letter code: Large ribosomal subunit protein bL25 (185 aa).

This sequence belongs to the bacterial ribosomal protein bL25 family. CTC subfamily. Part of the 50S ribosomal subunit; part of the 5S rRNA/L5/L18/L25 subcomplex. Contacts the 5S rRNA. Binds to the 5S rRNA independently of L5 and L18.

Its function is as follows. This is one of the proteins that binds to the 5S RNA in the ribosome where it forms part of the central protuberance. This chain is Large ribosomal subunit protein bL25, found in Chlamydia trachomatis serovar A (strain ATCC VR-571B / DSM 19440 / HAR-13).